Reading from the N-terminus, the 154-residue chain is Protein Smg homolog (154 aa).

Belongs to the Smg family.

This chain is Protein Smg homolog, found in Aromatoleum aromaticum (strain DSM 19018 / LMG 30748 / EbN1) (Azoarcus sp. (strain EbN1)).